A 447-amino-acid polypeptide reads, in one-letter code: Na(+)-translocating NADH-quinone reductase subunit A (447 aa).

Belongs to the NqrA family. In terms of assembly, composed of six subunits; NqrA, NqrB, NqrC, NqrD, NqrE and NqrF.

It carries out the reaction a ubiquinone + n Na(+)(in) + NADH + H(+) = a ubiquinol + n Na(+)(out) + NAD(+). NQR complex catalyzes the reduction of ubiquinone-1 to ubiquinol by two successive reactions, coupled with the transport of Na(+) ions from the cytoplasm to the periplasm. NqrA to NqrE are probably involved in the second step, the conversion of ubisemiquinone to ubiquinol. In Photorhabdus laumondii subsp. laumondii (strain DSM 15139 / CIP 105565 / TT01) (Photorhabdus luminescens subsp. laumondii), this protein is Na(+)-translocating NADH-quinone reductase subunit A.